Reading from the N-terminus, the 192-residue chain is Large ribosomal subunit protein bL9 (192 aa).

The interval 173 to 192 (ALRPEDFFDPEADGLDENEA) is disordered. Residues 179-192 (FFDPEADGLDENEA) show a composition bias toward acidic residues.

It belongs to the bacterial ribosomal protein bL9 family.

Binds to the 23S rRNA. This Rhizobium etli (strain ATCC 51251 / DSM 11541 / JCM 21823 / NBRC 15573 / CFN 42) protein is Large ribosomal subunit protein bL9.